Here is a 118-residue protein sequence, read N- to C-terminus: Vacuolar ATPase assembly integral membrane protein vma-21 (118 aa).

The Cytoplasmic portion of the chain corresponds to 1–35 (MATRRIISQEKTLLEKDDRIGSSPAASEKSNITPA). Residues 36-56 (VPASVIIKLLAFTFAMIVIPI) form a helical membrane-spanning segment. Topologically, residues 57 to 73 (SSYFLTVDRLFKGNSTY) are lumenal. A helical membrane pass occupies residues 74 to 94 (AGATAAIMANVVLIGYIIVAM). At 95 to 118 (AEDQSDQENEKKGGGGKGEGKKDL) the chain is on the cytoplasmic side. The disordered stretch occupies residues 98–118 (QSDQENEKKGGGGKGEGKKDL). Basic and acidic residues predominate over residues 102 to 118 (ENEKKGGGGKGEGKKDL). Positions 115 to 118 (KKDL) match the Prevents secretion from ER motif.

Belongs to the VMA21 family.

The protein resides in the endoplasmic reticulum membrane. Its subcellular location is the endoplasmic reticulum-Golgi intermediate compartment membrane. It localises to the cytoplasmic vesicle. It is found in the COPII-coated vesicle membrane. Its function is as follows. Required for the assembly of the V0 complex of the vacuolar ATPase (V-ATPase) in the endoplasmic reticulum. The sequence is that of Vacuolar ATPase assembly integral membrane protein vma-21 (vma-21) from Neurospora crassa (strain ATCC 24698 / 74-OR23-1A / CBS 708.71 / DSM 1257 / FGSC 987).